The chain runs to 1117 residues: WD repeat and HMG-box DNA-binding protein 1 (1117 aa).

WD repeat units follow at residues 11 to 50 (GHTE…DPKS), 52 to 91 (NVGE…GILT), 93 to 131 (FTTN…QQQT), 134 to 173 (GHDA…CAVS), 184 to 223 (VNAK…NPFD), 228 to 267 (SISQ…CMER), and 271 to 310 (EKGY…SGKV). A phosphoserine mark is found at Ser-333 and Ser-377. A Glycyl lysine isopeptide (Lys-Gly) (interchain with G-Cter in SUMO2) cross-link involves residue Lys-390. Lys-664 is subject to N6-acetyllysine. The tract at residues 816–885 (LAETQSEEEK…NLFQSANSSD (70 aa)) is disordered. Thr-819 is subject to Phosphothreonine. Ser-821 carries the phosphoserine modification. Residues 861–872 (DTVSEEKPESHN) are compositionally biased toward basic and acidic residues. Over residues 873 to 885 (HGQNLFQSANSSD) the composition is skewed to polar residues. 2 positions are modified to phosphoserine: Ser-910 and Ser-923. The interval 911–1005 (SKEPAVSANS…AVCLQNSENQ (95 aa)) is disordered. The span at 917–943 (SANSTRSANILDSMNKSSRKSTSLNRM) shows a compositional bias: polar residues. N6-acetyllysine is present on Lys-953. The span at 962–974 (KQASAASYFQKRT) shows a compositional bias: polar residues. Basic and acidic residues predominate over residues 975 to 987 (PQADKTEEVKENP). Residues 988 to 1004 (KSSSSDAPAVCLQNSEN) show a composition bias toward polar residues. A DNA-binding region (HMG box) is located at residues 1004–1073 (NQRPKTGFQM…SDGAEAKKRK (70 aa)). At Ser-1030 the chain carries Phosphoserine. A disordered region spans residues 1054-1074 (WTNKAKGETASDGAEAKKRKR). A Glycyl lysine isopeptide (Lys-Gly) (interchain with G-Cter in SUMO1); alternate cross-link involves residue Lys-1116. Lys-1116 participates in a covalent cross-link: Glycyl lysine isopeptide (Lys-Gly) (interchain with G-Cter in SUMO2); alternate.

As to quaternary structure, trimer. Interacts with the polymerase alpha catalytic subunit POLA1. Interacts with MCM10. Interacts with DNA2. Interacts with CDC45 and GINS2 subunit of GINS complex; these interactions associate WDHD1 with the CMG helicase complex.

The protein resides in the nucleus. The protein localises to the nucleoplasm. Functionally, core replisome component that acts as a replication initiation factor. Binds directly to the CMG complex and functions as a hub to recruit additional proteins to the replication fork. This Mus musculus (Mouse) protein is WD repeat and HMG-box DNA-binding protein 1 (Wdhd1).